The primary structure comprises 25 residues: Mu-conotoxin CnIIIB (25 aa).

A Pyrrolidone carboxylic acid; partial modification is found at glutamine 1. 3 disulfide bridges follow: cysteine 3–cysteine 15, cysteine 4–cysteine 21, and cysteine 10–cysteine 22.

It belongs to the conotoxin M superfamily. Expressed by the venom duct.

The protein localises to the secreted. In terms of biological role, mu-conotoxins block voltage-gated sodium channels (Nav). This synthetic toxin blocks slightly but irreversibly tetrodotoxin-resistant VGSCs. In Conus consors (Singed cone), this protein is Mu-conotoxin CnIIIB.